We begin with the raw amino-acid sequence, 511 residues long: 2'-acyl-2-O-sulfo-trehalose (hydroxy)phthioceranyltransferase PapA1 (511 aa).

It belongs to the PapA acyltransferase family.

It catalyses the reaction a (hydroxy)phthioceranyl-[(hydroxy)phthioceranic acid synthase] + 2'-palmitoyl/stearoyl-2-O-sulfo-alpha,alpha-trehalose = a 3'-(hydroxy)phthioceranyl-2'-palmitoyl/stearoyl-2-O-sulfo-alpha,alpha-trehalose + holo-[(hydroxy)phthioceranic acid synthase].. Its function is as follows. Required for the biosynthesis of sulfolipid-1 (SL-1), a major mycobacterial cell wall lipid. Catalyzes the acylation of trehalose-2-sulfate-2'-palmitate (SL659) by adding the (hydroxy)phthioceranoyl group at the 3'-position to yield the diacylated intermediate 2-palmitoyl-3-(C43)-phthioceranyl-alpha, alpha'-D-trehalose-2'-sulfate (SL1278). This Mycobacterium tuberculosis (strain CDC 1551 / Oshkosh) protein is 2'-acyl-2-O-sulfo-trehalose (hydroxy)phthioceranyltransferase PapA1 (papA1).